The following is a 228-amino-acid chain: Triosephosphate isomerase (228 aa).

9–11 provides a ligand contact to substrate; the sequence is NFK. H93 functions as the Electrophile in the catalytic mechanism. The active-site Proton acceptor is E141. Residues I146, G180, and 201–202 each bind substrate; that span reads AS.

The protein belongs to the triosephosphate isomerase family. As to quaternary structure, homotetramer; dimer of dimers.

The protein localises to the cytoplasm. The enzyme catalyses D-glyceraldehyde 3-phosphate = dihydroxyacetone phosphate. Its pathway is carbohydrate biosynthesis; gluconeogenesis. It functions in the pathway carbohydrate degradation; glycolysis; D-glyceraldehyde 3-phosphate from glycerone phosphate: step 1/1. Its function is as follows. Involved in the gluconeogenesis. Catalyzes stereospecifically the conversion of dihydroxyacetone phosphate (DHAP) to D-glyceraldehyde-3-phosphate (G3P). The polypeptide is Triosephosphate isomerase (Metallosphaera sedula (strain ATCC 51363 / DSM 5348 / JCM 9185 / NBRC 15509 / TH2)).